The following is a 63-amino-acid chain: MKANELREKSVEELNTELLGLLREQFNLRMQAASGQLQQTHLVKQVRHNIARVKTLLTEKAGA.

This sequence belongs to the universal ribosomal protein uL29 family.

The sequence is that of Large ribosomal subunit protein uL29 from Pectobacterium carotovorum subsp. carotovorum (strain PC1).